A 76-amino-acid polypeptide reads, in one-letter code: Large ribosomal subunit protein bL31 (76 aa).

It belongs to the bacterial ribosomal protein bL31 family. Type A subfamily. In terms of assembly, part of the 50S ribosomal subunit.

Its function is as follows. Binds the 23S rRNA. This chain is Large ribosomal subunit protein bL31, found in Beijerinckia indica subsp. indica (strain ATCC 9039 / DSM 1715 / NCIMB 8712).